Reading from the N-terminus, the 692-residue chain is ABC transporter F family member 5 (692 aa).

Positions 64–95 (EIESLFSKQPSQQDSDRKRNGKSSKNGASGIS) are disordered. The span at 86–95 (SSKNGASGIS) shows a compositional bias: polar residues. 2 ABC transporter domains span residues 98-356 (VKLE…ETQN) and 425-640 (VNVK…TKEL). Residues 130–137 (GVNGAGKT) and 457–464 (GPNGCGKS) each bind ATP. A disordered region spans residues 644–692 (AELEEKAPKVKAKSKMSKAEKEARKKQKMQAFQQAKQKSKASKNSKRWN). Over residues 680 to 692 (QKSKASKNSKRWN) the composition is skewed to basic residues.

It belongs to the ABC transporter superfamily. ABCF family. EF3 (TC 3.A.1.121) subfamily.

The sequence is that of ABC transporter F family member 5 (ABCF5) from Arabidopsis thaliana (Mouse-ear cress).